A 309-amino-acid polypeptide reads, in one-letter code: HPr kinase/phosphorylase (309 aa).

Catalysis depends on residues histidine 138 and lysine 159. 153–160 (GQSGVGKS) contacts ATP. Residue serine 160 coordinates Mg(2+). Aspartate 177 functions as the Proton acceptor; for phosphorylation activity. Proton donor; for dephosphorylation activity in the catalytic mechanism. An important for the catalytic mechanism of both phosphorylation and dephosphorylation region spans residues 201–210 (LEIRGLGIIN). Glutamate 202 is a binding site for Mg(2+). The active site involves arginine 243. Positions 264 to 269 (PVRPGR) are important for the catalytic mechanism of dephosphorylation.

The protein belongs to the HPrK/P family. Homohexamer. Requires Mg(2+) as cofactor.

It carries out the reaction [HPr protein]-L-serine + ATP = [HPr protein]-O-phospho-L-serine + ADP + H(+). The enzyme catalyses [HPr protein]-O-phospho-L-serine + phosphate + H(+) = [HPr protein]-L-serine + diphosphate. Its function is as follows. Catalyzes the ATP- as well as the pyrophosphate-dependent phosphorylation of a specific serine residue in HPr, a phosphocarrier protein of the phosphoenolpyruvate-dependent sugar phosphotransferase system (PTS). HprK/P also catalyzes the pyrophosphate-producing, inorganic phosphate-dependent dephosphorylation (phosphorolysis) of seryl-phosphorylated HPr (P-Ser-HPr). The two antagonistic activities of HprK/P are regulated by several intracellular metabolites, which change their concentration in response to the absence or presence of rapidly metabolisable carbon sources (glucose, fructose, etc.) in the growth medium. Also phosphorylates/dephosphorylates the HPr-like catabolite repression protein crh on a specific serine residue. Therefore, by controlling the phosphorylation state of HPr and crh, HPrK/P is a sensor enzyme that plays a major role in the regulation of carbon metabolism and sugar transport: it mediates carbon catabolite repression (CCR), and regulates PTS-catalyzed carbohydrate uptake and inducer exclusion. The sequence is that of HPr kinase/phosphorylase from Bacillus anthracis (strain A0248).